The sequence spans 173 residues: T-cell surface glycoprotein CD3 gamma chain (173 aa).

Positions 1–22 (MEQGKHLAGLILAVFLLQGTMA) are cleaved as a signal peptide. Topologically, residues 23-111 (HVKEVKVDDN…NCIELNPSTV (89 aa)) are extracellular. Residues 24-94 (VKEVKVDDNR…GSNNQSKSLQ (71 aa)) form the Ig-like domain. A disulfide bridge links cysteine 42 with cysteine 83. 2 N-linked (GlcNAc...) asparagine glycosylation sites follow: asparagine 45 and asparagine 88. A helical transmembrane segment spans residues 112-132 (AGFIFTEIVSIFLLAVGVYFI). Over 133–173 (AGQEGVRQSRASDKQTLLNNDQLYQPLKEREDDQYSHLRKN) the chain is Cytoplasmic. Phosphoserine is present on serine 141. Residue serine 144 is modified to Phosphoserine; by PKC. The region spanning 145–173 (DKQTLLNNDQLYQPLKEREDDQYSHLRKN) is the ITAM domain. Residues 149–150 (LL) carry the Di-leucine motif motif.

The TCR-CD3 complex is composed of a CD3D/CD3E and a CD3G/CD3E heterodimers that preferentially associate with TCRalpha and TCRbeta, respectively, to form TCRalpha/CD3E/CD3G and TCRbeta/CD3G/CD3E trimers. In turn, the hexamer interacts with CD3Z homodimer to form the TCR-CD3 complex. Alternatively, TCRalpha and TCRbeta can be replaced by TCRgamma and TCRdelta. Post-translationally, phosphorylated on Tyr residues after T-cell receptor triggering by LCK in association with CD4/CD8. Phosphorylated also by PKC; leading to the TCR complex down-regulation. Phosphorylated on Tyr residues after T-cell receptor triggering by LCK in association with CD4/CD8.

It is found in the cell membrane. In terms of biological role, part of the TCR-CD3 complex present on T-lymphocyte cell surface that plays an essential role in adaptive immune response. When antigen presenting cells (APCs) activate T-cell receptor (TCR), TCR-mediated signals are transmitted across the cell membrane by the CD3 chains CD3D, CD3E, CD3G and CD3Z. All CD3 chains contain immunoreceptor tyrosine-based activation motifs (ITAMs) in their cytoplasmic domain. Upon TCR engagement, these motifs become phosphorylated by Src family protein tyrosine kinases LCK and FYN, resulting in the activation of downstream signaling pathways. In addition to this role of signal transduction in T-cell activation, CD3G plays an essential role in the dynamic regulation of TCR expression at the cell surface. Indeed, constitutive TCR cycling is dependent on the di-leucine-based (diL) receptor-sorting motif present in CD3G. In Bos taurus (Bovine), this protein is T-cell surface glycoprotein CD3 gamma chain (CD3G).